We begin with the raw amino-acid sequence, 585 residues long: Protein DENND6B (585 aa).

The uDENN domain occupies 43-214; that stretch reads ECVCVVTFDL…LPVMGVVVQV (172 aa). The cDENN domain maps to 246–373; the sequence is VHELDLFRCF…VKLKKPSRLK (128 aa). The 125-residue stretch at 375–499 folds into the dDENN domain; that stretch reads LDTKPGLYTA…KSPHFDGWYR (125 aa).

It belongs to the DENND6 family.

The protein localises to the recycling endosome. It localises to the cytoplasm. In terms of biological role, guanine nucleotide exchange factor (GEF) for RAB14. Also has some, lesser GEF activity towards RAB35. The chain is Protein DENND6B (DENND6B) from Homo sapiens (Human).